A 229-amino-acid chain; its full sequence is Octanoyltransferase (229 aa).

Residues 47–225 enclose the BPL/LPL catalytic domain; that stretch reads PSSPEAVWIL…SLAARFHLAW (179 aa). Substrate is bound by residues 89-96, 156-158, and 169-171; these read RGGEVTHH, AIG, and GLA. The active-site Acyl-thioester intermediate is Cys-187.

The protein belongs to the LipB family.

It is found in the cytoplasm. It carries out the reaction octanoyl-[ACP] + L-lysyl-[protein] = N(6)-octanoyl-L-lysyl-[protein] + holo-[ACP] + H(+). It participates in protein modification; protein lipoylation via endogenous pathway; protein N(6)-(lipoyl)lysine from octanoyl-[acyl-carrier-protein]: step 1/2. Functionally, catalyzes the transfer of endogenously produced octanoic acid from octanoyl-acyl-carrier-protein onto the lipoyl domains of lipoate-dependent enzymes. Lipoyl-ACP can also act as a substrate although octanoyl-ACP is likely to be the physiological substrate. This is Octanoyltransferase from Synechococcus sp. (strain CC9902).